The sequence spans 249 residues: tRNA (guanine-N(1)-)-methyltransferase (249 aa).

S-adenosyl-L-methionine-binding positions include G113 and 133 to 138; that span reads IGDYVL.

It belongs to the RNA methyltransferase TrmD family. In terms of assembly, homodimer.

Its subcellular location is the cytoplasm. It catalyses the reaction guanosine(37) in tRNA + S-adenosyl-L-methionine = N(1)-methylguanosine(37) in tRNA + S-adenosyl-L-homocysteine + H(+). Its function is as follows. Specifically methylates guanosine-37 in various tRNAs. This chain is tRNA (guanine-N(1)-)-methyltransferase, found in Aeromonas salmonicida (strain A449).